The sequence spans 307 residues: Carbamate kinase (307 aa).

It belongs to the carbamate kinase family.

The protein resides in the cytoplasm. It catalyses the reaction hydrogencarbonate + NH4(+) + ATP = carbamoyl phosphate + ADP + H2O + H(+). It participates in metabolic intermediate metabolism; carbamoyl phosphate degradation; CO(2) and NH(3) from carbamoyl phosphate: step 1/1. In terms of biological role, carbamate kinase involved in the arginine deiminase pathway of fermentative arginine utilization. The sequence is that of Carbamate kinase (arcC) from Halobacterium salinarum (strain ATCC 700922 / JCM 11081 / NRC-1) (Halobacterium halobium).